The chain runs to 262 residues: Thiazole synthase (262 aa).

The Schiff-base intermediate with DXP role is filled by K104. 1-deoxy-D-xylulose 5-phosphate contacts are provided by residues G165, A191–G192, and N213–T214.

It belongs to the ThiG family. As to quaternary structure, homotetramer. Forms heterodimers with either ThiH or ThiS.

The protein localises to the cytoplasm. The enzyme catalyses [ThiS sulfur-carrier protein]-C-terminal-Gly-aminoethanethioate + 2-iminoacetate + 1-deoxy-D-xylulose 5-phosphate = [ThiS sulfur-carrier protein]-C-terminal Gly-Gly + 2-[(2R,5Z)-2-carboxy-4-methylthiazol-5(2H)-ylidene]ethyl phosphate + 2 H2O + H(+). It functions in the pathway cofactor biosynthesis; thiamine diphosphate biosynthesis. Its function is as follows. Catalyzes the rearrangement of 1-deoxy-D-xylulose 5-phosphate (DXP) to produce the thiazole phosphate moiety of thiamine. Sulfur is provided by the thiocarboxylate moiety of the carrier protein ThiS. In vitro, sulfur can be provided by H(2)S. The sequence is that of Thiazole synthase from Alkalilimnicola ehrlichii (strain ATCC BAA-1101 / DSM 17681 / MLHE-1).